Here is a 302-residue protein sequence, read N- to C-terminus: Probable alpha-L-glutamate ligase (302 aa).

An ATP-grasp domain is found at 105–288; that stretch reads LQLLARKGIP…LAGKIIEYIE (184 aa). Residues Lys142, 179–180, Asp188, and 212–214 contribute to the ATP site; these read EF and RAN. Mg(2+) is bound by residues Asp249, Glu261, and Asn263. Mn(2+) is bound by residues Asp249, Glu261, and Asn263.

Belongs to the RimK family. Requires Mg(2+) as cofactor. It depends on Mn(2+) as a cofactor.

This chain is Probable alpha-L-glutamate ligase, found in Legionella pneumophila (strain Paris).